A 990-amino-acid chain; its full sequence is Transposase for transposon Tn3926 (990 aa).

A disordered region spans residues 673–698 (GDGTTSSSDGQNFRTGSKAESTGHIN). Polar residues predominate over residues 674 to 696 (DGTTSSSDGQNFRTGSKAESTGH).

The protein belongs to the transposase 7 family.

Required for transposition of transposon Tn3926. This chain is Transposase for transposon Tn3926 (tnpA), found in Escherichia coli.